Consider the following 151-residue polypeptide: Large ribosomal subunit protein uL15 (151 aa).

Over residues 1–14 (MRREKKSRAYRGSR) the composition is skewed to basic residues. The disordered stretch occupies residues 1-33 (MRREKKSRAYRGSRTHGWGRVGQHRKSGSRGGR).

It belongs to the universal ribosomal protein uL15 family. In terms of assembly, part of the 50S ribosomal subunit.

Its function is as follows. Binds to the 23S rRNA. In Thermofilum pendens (strain DSM 2475 / Hrk 5), this protein is Large ribosomal subunit protein uL15.